The primary structure comprises 185 residues: Putative F-box protein At3g17400 (185 aa).

Residues 1 to 47 (MMTLSDLPSDLAEEVLSKIPVTSLRGVRATCKKWNTLSKDRSFTRKH) enclose the F-box domain.

The polypeptide is Putative F-box protein At3g17400 (Arabidopsis thaliana (Mouse-ear cress)).